We begin with the raw amino-acid sequence, 400 residues long: Elongation factor Tu (400 aa).

Residues 10 to 209 form the tr-type G domain; sequence KPHVNIGTIG…EVDNYIPTPE (200 aa). The interval 19–26 is G1; the sequence is GHVDHGKT. 19–26 serves as a coordination point for GTP; sequence GHVDHGKT. Mg(2+) is bound at residue T26. Residues 60–64 are G2; the sequence is GITIN. The interval 81–84 is G3; the sequence is DCPG. GTP is bound by residues 81–85 and 136–139; these read DCPGH and NKCD. Positions 136–139 are G4; it reads NKCD. Residues 174–176 form a G5 region; that stretch reads SAL.

Belongs to the TRAFAC class translation factor GTPase superfamily. Classic translation factor GTPase family. EF-Tu/EF-1A subfamily. Monomer.

It is found in the cytoplasm. It carries out the reaction GTP + H2O = GDP + phosphate + H(+). Its function is as follows. GTP hydrolase that promotes the GTP-dependent binding of aminoacyl-tRNA to the A-site of ribosomes during protein biosynthesis. In Ruminiclostridium cellulolyticum (strain ATCC 35319 / DSM 5812 / JCM 6584 / H10) (Clostridium cellulolyticum), this protein is Elongation factor Tu.